A 229-amino-acid polypeptide reads, in one-letter code: Large ribosomal subunit protein uL1 (229 aa).

The protein belongs to the universal ribosomal protein uL1 family. In terms of assembly, part of the 50S ribosomal subunit.

In terms of biological role, binds directly to 23S rRNA. The L1 stalk is quite mobile in the ribosome, and is involved in E site tRNA release. Its function is as follows. Protein L1 is also a translational repressor protein, it controls the translation of the L11 operon by binding to its mRNA. The protein is Large ribosomal subunit protein uL1 of Lactococcus lactis subsp. lactis (strain IL1403) (Streptococcus lactis).